Here is a 627-residue protein sequence, read N- to C-terminus: WPP domain-interacting tail-anchored protein 2 (627 aa).

3 coiled-coil regions span residues 81 to 152 (CGIL…RRTL), 188 to 218 (LEKS…KLHY), and 312 to 542 (TLRE…KILR). Residues 577–597 (SLQEDERTREEPEKQSVSEKS) are disordered. A compositionally biased stretch (basic and acidic residues) spans 580–597 (EDERTREEPEKQSVSEKS). A helical transmembrane segment spans residues 606–626 (LKHILVVALVFVLFCSFFGVT).

In terms of assembly, component of Ran complexes at least composed of WIT1 or WIT2, RANGAP1 or RANGAP2, and WIP1 or WIP2 or WIP3. Interacts with KAKU1. Core component of the LINC complex which is composed of inner nuclear membrane SUN domain-containing proteins coupled to outer nuclear membrane WIP and WIT proteins. The LINC complex also involves nucleoskeletal proteins CRWN/LINC and possibly KAKU4 and the cytoskeletal myosin KAKU1. Interacts with WIP1, WIP2 and WIP3. As to expression, ubiquitous.

It is found in the membrane. In terms of biological role, together with WIT1, required for the nuclear envelope docking of RANGAP proteins in root tips. Plays a role in nuclear shape determination. As component of the SUN-WIP-WIT2-KAKU1 complex, mediates the transfer of cytoplasmic forces to the nuclear envelope (NE), leading to nuclear shape changes. The sequence is that of WPP domain-interacting tail-anchored protein 2 (WIT2) from Arabidopsis thaliana (Mouse-ear cress).